A 270-amino-acid chain; its full sequence is Putative ABC transporter ATP-binding protein MG304 homolog (270 aa).

Positions 2 to 232 constitute an ABC transporter domain; it reads LNVTNLSFTY…LHLFHQHHFT (231 aa). Position 36-43 (36-43) interacts with ATP; sequence GHNGSGKS.

Belongs to the ABC transporter superfamily.

The polypeptide is Putative ABC transporter ATP-binding protein MG304 homolog (Mycoplasma pneumoniae (strain ATCC 29342 / M129 / Subtype 1) (Mycoplasmoides pneumoniae)).